The primary structure comprises 131 residues: Profilin-8 (131 aa).

A disulfide bond links Cys13 and Cys115. The Involved in PIP2 interaction signature appears at 81-97; that stretch reads AVIRGKKGAGGITIKKT. Thr111 carries the post-translational modification Phosphothreonine.

Belongs to the profilin family. In terms of assembly, occurs in many kinds of cells as a complex with monomeric actin in a 1:1 ratio. Phosphorylated by MAP kinases.

Its subcellular location is the cytoplasm. The protein localises to the cytoskeleton. Binds to actin and affects the structure of the cytoskeleton. At high concentrations, profilin prevents the polymerization of actin, whereas it enhances it at low concentrations. The polypeptide is Profilin-8 (Olea europaea (Common olive)).